Consider the following 498-residue polypeptide: Dynein regulatory complex subunit 2 (498 aa).

3 coiled-coil regions span residues valine 98 to isoleucine 160, lysine 250 to arginine 311, and serine 417 to aspartate 441.

This sequence belongs to the DRC2 family. As to quaternary structure, component of the nexin-dynein regulatory complex (N-DRC). Interacts with DRC1.

Its subcellular location is the cytoplasm. The protein resides in the cytoskeleton. It is found in the flagellum basal body. It localises to the cell projection. The protein localises to the cilium. Its subcellular location is the flagellum. The protein resides in the flagellum axoneme. Its function is as follows. Component of the nexin-dynein regulatory complex (N-DRC), a key regulator of ciliary/flagellar motility which maintains the alignment and integrity of the distal axoneme and regulates microtubule sliding in motile axonemes. Plays a critical role in the assembly of N-DRC and also stabilizes the assembly of multiple inner dynein arms and radial spokes. Coassembles with DRC1 to form a central scaffold needed for assembly of the N-DRC and its attachment to the outer doublet microtubules. This Bos taurus (Bovine) protein is Dynein regulatory complex subunit 2 (CCDC65).